Here is a 263-residue protein sequence, read N- to C-terminus: Hydroxyethylthiazole kinase (263 aa).

Substrate is bound at residue Met-41. ATP-binding residues include Arg-117 and Ser-163. Gly-190 is a binding site for substrate.

It belongs to the Thz kinase family. The cofactor is Mg(2+).

The catalysed reaction is 5-(2-hydroxyethyl)-4-methylthiazole + ATP = 4-methyl-5-(2-phosphooxyethyl)-thiazole + ADP + H(+). The protein operates within cofactor biosynthesis; thiamine diphosphate biosynthesis; 4-methyl-5-(2-phosphoethyl)-thiazole from 5-(2-hydroxyethyl)-4-methylthiazole: step 1/1. In terms of biological role, catalyzes the phosphorylation of the hydroxyl group of 4-methyl-5-beta-hydroxyethylthiazole (THZ). The chain is Hydroxyethylthiazole kinase from Lactiplantibacillus plantarum (strain ATCC BAA-793 / NCIMB 8826 / WCFS1) (Lactobacillus plantarum).